The sequence spans 153 residues: MTYTVEVLVDDDLAVDAALVERAAQAVLTAEQVPAGCEVCIRITTDAELHRLNRDFRGVDAPTDVLSFADDGNSSQFVTAPNLPRYLGDIAISYDRVLVQAAEYGHSPARELAYLTVHGMLHLLGYDHERGPADEALMRAREEAVMTALGLPR.

Zn(2+) contacts are provided by His-118, His-122, and His-128.

Belongs to the endoribonuclease YbeY family. Zn(2+) serves as cofactor.

The protein resides in the cytoplasm. Single strand-specific metallo-endoribonuclease involved in late-stage 70S ribosome quality control and in maturation of the 3' terminus of the 16S rRNA. This chain is Endoribonuclease YbeY, found in Chloroflexus aggregans (strain MD-66 / DSM 9485).